Here is a 201-residue protein sequence, read N- to C-terminus: MKLIVSVFLIGCQFLNILGERQCITMIPKLCFNNNYSGNTTLDKWRTVMQFTYGDVEPNIIIPNGFVEGSNRCMNVEATTVCFSEPPLSNPELLSETWTMTDLYFKMPRSWWIFEIGKPRVCANVENMVCFAVSDDEGTHQWSFKVNMLYGNVVPKLGPPNKRVRNYCMKVDESKICFSEQPLLDDFSNKSWKLNKILFNV.

Positions 1–19 are cleaved as a signal peptide; that stretch reads MKLIVSVFLIGCQFLNILG.

This is an uncharacterized protein from Acheta domesticus (House cricket).